The chain runs to 424 residues: Enolase (424 aa).

Glutamine 165 is a binding site for (2R)-2-phosphoglycerate. The active-site Proton donor is glutamate 207. Aspartate 244, glutamate 283, and aspartate 310 together coordinate Mg(2+). (2R)-2-phosphoglycerate-binding residues include lysine 335, arginine 364, serine 365, and lysine 386. The Proton acceptor role is filled by lysine 335.

The protein belongs to the enolase family. Requires Mg(2+) as cofactor.

The protein localises to the cytoplasm. Its subcellular location is the secreted. The protein resides in the cell surface. The enzyme catalyses (2R)-2-phosphoglycerate = phosphoenolpyruvate + H2O. It functions in the pathway carbohydrate degradation; glycolysis; pyruvate from D-glyceraldehyde 3-phosphate: step 4/5. Catalyzes the reversible conversion of 2-phosphoglycerate (2-PG) into phosphoenolpyruvate (PEP). It is essential for the degradation of carbohydrates via glycolysis. The chain is Enolase from Chlamydia abortus (strain DSM 27085 / S26/3) (Chlamydophila abortus).